A 204-amino-acid chain; its full sequence is uncharacterized protein (204 aa).

The chain crosses the membrane as a helical span at residues 63-83; it reads SLLLSMVASVTAAGGNAAIVG.

It localises to the membrane. This is an uncharacterized protein from Mycobacterium tuberculosis (strain ATCC 25618 / H37Rv).